A 253-amino-acid chain; its full sequence is CENP-A recruiting complex protein mis20 (253 aa).

The segment at 113-136 is disordered; sequence TGPTTSKNKHPSHSNTIRSPPYKV.

In terms of assembly, component of the CENP-A recruiting complex composed of at least mis16, mis19, mis19 and mis20.

It localises to the cytoplasm. The protein resides in the cytoskeleton. Its subcellular location is the microtubule organizing center. It is found in the spindle pole body. The protein localises to the chromosome. It localises to the centromere. Functionally, component of the CENP-A recruiting complex that ensures the integrity of mitotic spindles through maintenance of kinetochore factors mis6/CENP-I and cnp1/CENP-A. Seems dispensable for proper chromosome segregation. This is CENP-A recruiting complex protein mis20 from Schizosaccharomyces pombe (strain 972 / ATCC 24843) (Fission yeast).